The primary structure comprises 243 residues: Mannosyl-3-phosphoglycerate phosphatase (243 aa).

Asp8 functions as the Nucleophile in the catalytic mechanism. Positions 8, 10, 169, and 204 each coordinate Mg(2+).

Belongs to the HAD-like hydrolase superfamily. MPGP family. Requires Mg(2+) as cofactor.

It is found in the cytoplasm. The catalysed reaction is 2-O-(alpha-D-mannosyl)-3-phosphoglycerate + H2O = (2R)-2-O-(alpha-D-mannosyl)-glycerate + phosphate. Its pathway is carbohydrate biosynthesis; 2-(alpha-D-mannosyl)-D-glycerate biosynthesis; 2-(alpha-D-mannosyl)-D-glycerate from GDP-alpha-D-mannose (MPG route): step 2/2. Its function is as follows. Hydrolyzes mannosyl-3-phosphoglycerate (MPG) to form the osmolyte mannosylglycerate (MG). The enzyme is absolutely specific for MPG. The sequence is that of Mannosyl-3-phosphoglycerate phosphatase from Pyrococcus horikoshii (strain ATCC 700860 / DSM 12428 / JCM 9974 / NBRC 100139 / OT-3).